Consider the following 384-residue polypeptide: F-box A protein 224 (384 aa).

An F-box domain is found at 71 to 122 (PKSLSDFPIGVMYDVLGHVDPFERLVLRKVSRNLRDVVQKMRCELDALYVNK).

The protein belongs to the FTH family.

The protein is F-box A protein 224 (fbxa-224) of Caenorhabditis elegans.